The primary structure comprises 81 residues: Antitoxin VapB20 (81 aa).

In terms of biological role, antitoxin component of a type II toxin-antitoxin (TA) system. Neutralizes the toxic effect of cognate toxin VapC20. This Mycobacterium tuberculosis (strain CDC 1551 / Oshkosh) protein is Antitoxin VapB20 (vapB20).